Reading from the N-terminus, the 241-residue chain is MAGHSKWANIKHKKAAADAKRGKIWTRLIKEITVAARLGGGDVDSNPRLRLAIDKGTDANMPKDNIQRAIQRGVGGLEGAHYEEIRYEGYGISGAAIIVDCMTDNRTRTVAEVRHAFDKHGGNMGTQGSVAFMFDHVGQFIFAPGTPEDKLMDAALEAGAEDVVTNDDGSIEVLCPPNDFAKVKAALEGAGFKAELAEVIMKPQTEVEFTGDDAAKMQKLLDALENLDDVQEVYTNAVIGE.

It belongs to the TACO1 family.

It is found in the cytoplasm. This is Probable transcriptional regulatory protein RSc2190 from Ralstonia nicotianae (strain ATCC BAA-1114 / GMI1000) (Ralstonia solanacearum).